A 216-amino-acid polypeptide reads, in one-letter code: CRIB domain-containing protein RIC7 (216 aa).

The region spanning 36–49 (IGNPTDVKHVAHIG) is the CRIB domain. The interval 52 to 216 (GPSDNATAPS…PQFEDDRNGF (165 aa)) is disordered. Residues 108 to 121 (SSSEKGSPTKERSD) show a composition bias toward basic and acidic residues.

In terms of assembly, interacts with ARAC4/ROP2 and ARAC11/ROP1. As to expression, expressed in roots, leaves, guard cells, stems, flowers, siliques and pollen.

It is found in the nucleus. The protein localises to the cytoplasm. Its subcellular location is the cell membrane. Functionally, functions as a downstream effector of Rho-related GTP binding proteins of the 'Rho of Plants' (ROPs) family. Participates in the propagation of ROP GTPase signals in specific cellular responses. Functions as a downstream effector of active ARAC4/ROP2 GTPase which is involved in the prevention of excessive stomatal opening upon light stimulation. Is involved in pollen tube growth regulation through its interaction with ARAC11/ROP1. In Arabidopsis thaliana (Mouse-ear cress), this protein is CRIB domain-containing protein RIC7 (RIC7).